Reading from the N-terminus, the 194-residue chain is Protein PHLOEM PROTEIN 2-LIKE A2 (194 aa).

Residues 49-71 (VTFVFFCFFKISLNSAYLYTLYS) form a helical membrane-spanning segment.

As to expression, vascular tissues, specifically in phloem companion cell-sieve element complexes.

It localises to the membrane. The polypeptide is Protein PHLOEM PROTEIN 2-LIKE A2 (PP2A2) (Arabidopsis thaliana (Mouse-ear cress)).